The primary structure comprises 361 residues: tRNA-specific 2-thiouridylase MnmA (361 aa).

Residues 6–13 (AMSGGVDS) and L32 each bind ATP. Catalysis depends on C101, which acts as the Nucleophile. A disulfide bridge links C101 with C194. Position 125 (G125) interacts with ATP. Residues 144–146 (KDQ) form an interaction with tRNA region. C194 acts as the Cysteine persulfide intermediate in catalysis.

Belongs to the MnmA/TRMU family.

It localises to the cytoplasm. The enzyme catalyses S-sulfanyl-L-cysteinyl-[protein] + uridine(34) in tRNA + AH2 + ATP = 2-thiouridine(34) in tRNA + L-cysteinyl-[protein] + A + AMP + diphosphate + H(+). Its function is as follows. Catalyzes the 2-thiolation of uridine at the wobble position (U34) of tRNA, leading to the formation of s(2)U34. The chain is tRNA-specific 2-thiouridylase MnmA from Corynebacterium aurimucosum (strain ATCC 700975 / DSM 44827 / CIP 107346 / CN-1) (Corynebacterium nigricans).